The sequence spans 115 residues: Large ribosomal subunit protein bL19 (115 aa).

The protein belongs to the bacterial ribosomal protein bL19 family.

Functionally, this protein is located at the 30S-50S ribosomal subunit interface and may play a role in the structure and function of the aminoacyl-tRNA binding site. In Baumannia cicadellinicola subsp. Homalodisca coagulata, this protein is Large ribosomal subunit protein bL19.